Consider the following 72-residue polypeptide: Translation initiation factor IF-1 (72 aa).

The S1-like domain occupies 1–72 (MSKEELLEFP…TKGRITYRFK (72 aa)).

It belongs to the IF-1 family. As to quaternary structure, component of the 30S ribosomal translation pre-initiation complex which assembles on the 30S ribosome in the order IF-2 and IF-3, IF-1 and N-formylmethionyl-tRNA(fMet); mRNA recruitment can occur at any time during PIC assembly.

The protein resides in the cytoplasm. One of the essential components for the initiation of protein synthesis. Stabilizes the binding of IF-2 and IF-3 on the 30S subunit to which N-formylmethionyl-tRNA(fMet) subsequently binds. Helps modulate mRNA selection, yielding the 30S pre-initiation complex (PIC). Upon addition of the 50S ribosomal subunit IF-1, IF-2 and IF-3 are released leaving the mature 70S translation initiation complex. This is Translation initiation factor IF-1 from Parvibaculum lavamentivorans (strain DS-1 / DSM 13023 / NCIMB 13966).